Consider the following 464-residue polypeptide: Glutamate--tRNA ligase (464 aa).

The 'HIGH' region signature appears at 10–20; that stretch reads PSPTGYLHIGG. The span at 113-130 shows a compositional bias: basic and acidic residues; the sequence is QEAKKEKPRYDGRWRPEA. Positions 113 to 142 are disordered; it reads QEAKKEKPRYDGRWRPEAGKALPVPPTDVP. Residues 242-246 carry the 'KMSKS' region motif; sequence KLSKR. Lysine 245 is a binding site for ATP.

It belongs to the class-I aminoacyl-tRNA synthetase family. Glutamate--tRNA ligase type 1 subfamily. Monomer.

The protein resides in the cytoplasm. It carries out the reaction tRNA(Glu) + L-glutamate + ATP = L-glutamyl-tRNA(Glu) + AMP + diphosphate. Functionally, catalyzes the attachment of glutamate to tRNA(Glu) in a two-step reaction: glutamate is first activated by ATP to form Glu-AMP and then transferred to the acceptor end of tRNA(Glu). The chain is Glutamate--tRNA ligase from Dechloromonas aromatica (strain RCB).